A 453-amino-acid chain; its full sequence is Gastrin/cholecystokinin type B receptor (453 aa).

The Extracellular portion of the chain corresponds to 1 to 57 (MELLKLNRSAQGSGAGPGASLCRAGGALLNSSGAGNLSCEPPRLRGAGTRELELAIR). Asn-7, Asn-30, and Asn-36 each carry an N-linked (GlcNAc...) asparagine glycan. A helical transmembrane segment spans residues 58 to 79 (VTLYAVIFLMSVGGNVLIIVVL). Residues 80 to 87 (GLSRRLRT) are Cytoplasmic-facing. The chain crosses the membrane as a helical span at residues 88–109 (VTNAFLLSLAVSDLLLAVACMP). Over 110 to 131 (FTLLPNLMGTFIFGTVVCKAVS) the chain is Extracellular. Cys-127 and Cys-206 are joined by a disulfide. The chain crosses the membrane as a helical span at residues 132-150 (YLMGVSVSVSTLSLVAIAL). Topologically, residues 151–170 (ERYSAICRPLQARVWQTRSH) are cytoplasmic. A helical membrane pass occupies residues 171–189 (AARVIIATWMLSGLLMVPY). Topologically, residues 190 to 220 (PVYTAVQPAGGARALQCVHRWPSARVRQTWS) are extracellular. Residues 221 to 243 (VLLLLLLFFVPGVVMAVAYGLIS) form a helical membrane-spanning segment. Topologically, residues 244–339 (RELYLGLRFD…KLLAKKRVVR (96 aa)) are cytoplasmic. Residues 258-286 (SESRVRSQGGLRGGAGPGPAPPNGSCRPE) are disordered. A helical transmembrane segment spans residues 340–361 (MLLVIVVLFFLCWLPLYSANTW). The Extracellular segment spans residues 362 to 379 (RAFDSSGAHRALSGAPIS). Residues 380 to 400 (FIHLLSYASACVNPLVYCFMH) traverse the membrane as a helical segment. Residues 401 to 453 (RRFRQACLETCARCCPRPPRARPRPLPDEDPPTPSIASLSRLSYTTISTLGPG) are Cytoplasmic-facing. A lipid anchor (S-palmitoyl cysteine) is attached at Cys-414. Positions 422 to 453 (RPRPLPDEDPPTPSIASLSRLSYTTISTLGPG) are disordered. Over residues 435–453 (SIASLSRLSYTTISTLGPG) the composition is skewed to polar residues.

This sequence belongs to the G-protein coupled receptor 1 family. In terms of tissue distribution, parietal cells, pancreas, brain and various neoplastic tissues.

Its subcellular location is the cell membrane. Functionally, receptor for gastrin and cholecystokinin. The CCK-B receptors occur throughout the central nervous system where they modulate anxiety, analgesia, arousal, and neuroleptic activity. This receptor mediates its action by association with G proteins that activate a phosphatidylinositol-calcium second messenger system. The chain is Gastrin/cholecystokinin type B receptor (CCKBR) from Canis lupus familiaris (Dog).